The primary structure comprises 514 residues: Flagellin B (514 aa).

The protein belongs to the bacterial flagellin family. As to quaternary structure, heteromer of FlaA and FlaB. FlaB is located proximal to the hook while the remainder of the filament is composed of the predominant FlaA.

Its subcellular location is the secreted. It is found in the bacterial flagellum. In terms of biological role, flagellin is the subunit protein which polymerizes to form the filaments of bacterial flagella. Important for motility and virulence. This is Flagellin B (flaB) from Helicobacter pylori (strain J99 / ATCC 700824) (Campylobacter pylori J99).